A 387-amino-acid polypeptide reads, in one-letter code: 3-ketoacyl-CoA thiolase (387 aa).

Residue C91 is the Acyl-thioester intermediate of the active site. Catalysis depends on proton acceptor residues H343 and C373.

It belongs to the thiolase-like superfamily. Thiolase family. In terms of assembly, heterotetramer of two alpha chains (FadB) and two beta chains (FadA).

The protein localises to the cytoplasm. The enzyme catalyses an acyl-CoA + acetyl-CoA = a 3-oxoacyl-CoA + CoA. It participates in lipid metabolism; fatty acid beta-oxidation. Its function is as follows. Catalyzes the final step of fatty acid oxidation in which acetyl-CoA is released and the CoA ester of a fatty acid two carbons shorter is formed. This chain is 3-ketoacyl-CoA thiolase, found in Aeromonas salmonicida (strain A449).